Consider the following 413-residue polypeptide: Hemolin (413 aa).

The N-terminal stretch at M1–A18 is a signal peptide. 4 consecutive Ig-like C2-type domains span residues P25–S112, P122–R211, P233–T322, and P327–N413. Cystine bridges form between C46-C97, C140-C199, C252-C305, and C349-C395. N283 carries an N-linked (GlcNAc...) asparagine glycan.

It belongs to the hemolin family. In terms of tissue distribution, expressed in larval bristles.

The protein resides in the secreted. With respect to regulation, increased activity in presence of phospholipids (low concentrations) and calcium ions. Inhibited by PMSF. Not affected by EDTA and E-64. Bristle toxin involved in caterpillar defense by participating in hemorrhagic syndrome characterized by a consumptive coagulopathy. Exhibits procoagulant activity through selective factor X proteolytic activation. Activates factor X in a dose- and time-dependent manner but does not activate gamma-carboxyglutamic acid domainless factor X. Its activity does not depend on calcium ions. Also functions as a growth stimulator and an inhibitor of cellular death for endothelial cells. In vitro, increases proliferation of human umbilical vein endothelial cells (HUVEC) and inhibits the apoptosis induced by starvation. Also increases slightly the complement decay-accelerating factor (CD55), which protects cells from complement-mediated lysis. On the other hand, does not alter the release or expression of von Willebrand factor (VWF), tissue factor (F3), intercellular adhesion molecule-1 (ICAM1), interleukin-8 (CXCL8), and prostacyclin. Does not show fibrinolytic or fibrinogenolytic activities. This Lonomia obliqua (Moth) protein is Hemolin.